Reading from the N-terminus, the 270-residue chain is Putative phosphoenolpyruvate synthase regulatory protein (270 aa).

Position 154 to 161 (154 to 161 (GVSRAGKT)) interacts with ADP.

Belongs to the pyruvate, phosphate/water dikinase regulatory protein family. PSRP subfamily.

The enzyme catalyses [pyruvate, water dikinase] + ADP = [pyruvate, water dikinase]-phosphate + AMP + H(+). It carries out the reaction [pyruvate, water dikinase]-phosphate + phosphate + H(+) = [pyruvate, water dikinase] + diphosphate. Bifunctional serine/threonine kinase and phosphorylase involved in the regulation of the phosphoenolpyruvate synthase (PEPS) by catalyzing its phosphorylation/dephosphorylation. The polypeptide is Putative phosphoenolpyruvate synthase regulatory protein (Deinococcus geothermalis (strain DSM 11300 / CIP 105573 / AG-3a)).